The primary structure comprises 566 residues: Medium-chain fatty-acid--CoA ligase (566 aa).

231–242 (ILASERAYCARL) is an ATP binding site.

This sequence belongs to the ATP-dependent AMP-binding enzyme family. In terms of assembly, homodimer. Mg(2+) serves as cofactor.

It is found in the cell membrane. It carries out the reaction hexanoate + ATP + CoA = hexanoyl-CoA + AMP + diphosphate. The enzyme catalyses octanoate + ATP + CoA = octanoyl-CoA + AMP + diphosphate. The catalysed reaction is dodecanoate + ATP + CoA = dodecanoyl-CoA + AMP + diphosphate. The protein operates within lipid metabolism; fatty acid beta-oxidation. Functionally, catalyzes the esterification, concomitant with transport, of exogenous fatty acids into metabolically active CoA thioesters for subsequent degradation or incorporation into phospholipids. Is maximally active on C6:0, C8:0 and C12:0 fatty acids, while has a low activity on C14-C18 chain length fatty acids. Is involved in the anaerobic beta-oxidative degradation of fatty acids, which allows anaerobic growth of E.coli on fatty acids as a sole carbon and energy source in the presence of nitrate or fumarate as a terminal electron acceptor. Can functionally replace FadD under anaerobic conditions. This chain is Medium-chain fatty-acid--CoA ligase, found in Escherichia coli (strain K12).